Consider the following 750-residue polypeptide: Photosystem I P700 chlorophyll a apoprotein A1 (750 aa).

A run of 8 helical transmembrane segments spans residues 70–93, 156–179, 195–219, 291–309, 346–369, 385–411, 433–455, and 531–549; these read VFSA…FHGA, LYCT…FHYH, LNHH…HVSL, IAHH…GHMY, WHAQ…HHMY, LSLF…IFMV, AIIS…LYIH, and FLVH…LILL. [4Fe-4S] cluster is bound by residues C573 and C582. The next 2 helical transmembrane spans lie at 589 to 610 and 664 to 686; these read HVFL…HFSW and LSAY…MFLF. H675 is a chlorophyll a' binding site. Residues M683 and Y691 each coordinate chlorophyll a. Residue W692 participates in phylloquinone binding. A helical membrane pass occupies residues 724–744; that stretch reads AVGVTHYLLGGIATTWAFFLA.

It belongs to the PsaA/PsaB family. In terms of assembly, the PsaA/B heterodimer binds the P700 chlorophyll special pair and subsequent electron acceptors. PSI consists of a core antenna complex that captures photons, and an electron transfer chain that converts photonic excitation into a charge separation. The eukaryotic PSI reaction center is composed of at least 11 subunits. Requires P700 is a chlorophyll a/chlorophyll a' dimer, A0 is one or more chlorophyll a, A1 is one or both phylloquinones and FX is a shared 4Fe-4S iron-sulfur center. as cofactor.

The protein resides in the plastid. It is found in the chloroplast thylakoid membrane. The catalysed reaction is reduced [plastocyanin] + hnu + oxidized [2Fe-2S]-[ferredoxin] = oxidized [plastocyanin] + reduced [2Fe-2S]-[ferredoxin]. In terms of biological role, psaA and PsaB bind P700, the primary electron donor of photosystem I (PSI), as well as the electron acceptors A0, A1 and FX. PSI is a plastocyanin-ferredoxin oxidoreductase, converting photonic excitation into a charge separation, which transfers an electron from the donor P700 chlorophyll pair to the spectroscopically characterized acceptors A0, A1, FX, FA and FB in turn. Oxidized P700 is reduced on the lumenal side of the thylakoid membrane by plastocyanin. The sequence is that of Photosystem I P700 chlorophyll a apoprotein A1 from Jasminum nudiflorum (Winter jasmine).